We begin with the raw amino-acid sequence, 102 residues long: Heat shock protein HspQ (102 aa).

Belongs to the HspQ family.

The protein localises to the cytoplasm. Involved in the degradation of certain denaturated proteins, including DnaA, during heat shock stress. The sequence is that of Heat shock protein HspQ from Pectobacterium atrosepticum (strain SCRI 1043 / ATCC BAA-672) (Erwinia carotovora subsp. atroseptica).